A 139-amino-acid chain; its full sequence is Nucleoside diphosphate kinase (139 aa).

6 residues coordinate ATP: lysine 11, phenylalanine 59, arginine 87, threonine 93, arginine 104, and asparagine 114. Histidine 117 functions as the Pros-phosphohistidine intermediate in the catalytic mechanism.

It belongs to the NDK family. In terms of assembly, homotetramer. The cofactor is Mg(2+).

Its subcellular location is the cytoplasm. It carries out the reaction a 2'-deoxyribonucleoside 5'-diphosphate + ATP = a 2'-deoxyribonucleoside 5'-triphosphate + ADP. It catalyses the reaction a ribonucleoside 5'-diphosphate + ATP = a ribonucleoside 5'-triphosphate + ADP. In terms of biological role, major role in the synthesis of nucleoside triphosphates other than ATP. The ATP gamma phosphate is transferred to the NDP beta phosphate via a ping-pong mechanism, using a phosphorylated active-site intermediate. This is Nucleoside diphosphate kinase from Wolbachia sp. subsp. Brugia malayi (strain TRS).